We begin with the raw amino-acid sequence, 184 residues long: Peptide deformylase (184 aa).

Fe cation contacts are provided by C111 and H154. The active site involves E155. H158 contacts Fe cation.

This sequence belongs to the polypeptide deformylase family. Fe(2+) serves as cofactor.

The enzyme catalyses N-terminal N-formyl-L-methionyl-[peptide] + H2O = N-terminal L-methionyl-[peptide] + formate. Its function is as follows. Removes the formyl group from the N-terminal Met of newly synthesized proteins. Requires at least a dipeptide for an efficient rate of reaction. N-terminal L-methionine is a prerequisite for activity but the enzyme has broad specificity at other positions. This is Peptide deformylase from Lactobacillus delbrueckii subsp. bulgaricus (strain ATCC 11842 / DSM 20081 / BCRC 10696 / JCM 1002 / NBRC 13953 / NCIMB 11778 / NCTC 12712 / WDCM 00102 / Lb 14).